Consider the following 104-residue polypeptide: Small ribosomal subunit protein uS10 (104 aa).

The protein belongs to the universal ribosomal protein uS10 family. In terms of assembly, part of the 30S ribosomal subunit.

Its function is as follows. Involved in the binding of tRNA to the ribosomes. The polypeptide is Small ribosomal subunit protein uS10 (Thermosynechococcus vestitus (strain NIES-2133 / IAM M-273 / BP-1)).